A 957-amino-acid polypeptide reads, in one-letter code: SH3 domain-binding protein 4-B (957 aa).

In terms of domain architecture, SH3 1 spans 54-113; that stretch reads ENVKEVVAIKDYCPNNFTTLKFSKGEHLYVLDASGGDWWYAHNTTEMGYIPSSYVQPLNY. The ZU5 domain maps to 312 to 449; the sequence is TSIVCRLDSS…LEPVMYVVMV (138 aa). In terms of domain architecture, SH3 2 spans 649 to 719; it reads TSLKYGKLIK…HAKNVLVVGK (71 aa).

In terms of assembly, homodimer or homooligomer.

The protein localises to the membrane. The protein resides in the clathrin-coated pit. It is found in the cytoplasmic vesicle. Its subcellular location is the clathrin-coated vesicle. It localises to the nucleus. Its function is as follows. Possible role in regulating endocytosis of the transferrin receptor at the plasma membrane. Alternatively, may function as a negative regulator of the amino acid-induced TOR signaling by inhibiting the formation of active Rag GTPase complexes. Preferentially binds inactive Rag GTPase complexes and prevents their interaction with the mTORC1 complex inhibiting its relocalization to lysosomes and its activation. Thereby, may indirectly regulate cell growth, proliferation and autophagy. The protein is SH3 domain-binding protein 4-B (sh3bp4-b) of Xenopus laevis (African clawed frog).